Consider the following 602-residue polypeptide: mRNA-capping enzyme subunit beta (602 aa).

Positions 1–249 are disordered; it reads MSEHHSKRAL…NESNSEETHD (249 aa). Over residues 15-42 the composition is skewed to basic and acidic residues; it reads LVNHDENDKSKLQKLADNESSVRSDDNR. Residues 48–64 show a composition bias toward low complexity; sequence NIVNGNNSNSDLNSNGV. The span at 65–76 shows a compositional bias: acidic residues; sequence IEEDTDTDDDVG. A compositionally biased stretch (basic and acidic residues) spans 88 to 110; the sequence is DYDKQDRFSPEKKRIQARKKDTS. Positions 114 to 128 are enriched in low complexity; that stretch reads PSISNESPSNSKESS. Residues 141–169 show a composition bias toward basic and acidic residues; the sequence is TDRKDSSEEKPDLTGPELVKEPDTNEYKR. The segment covering 171–181 has biased composition (polar residues); that stretch reads SIQSITNAEDT. Basic and acidic residues-rich tracts occupy residues 213–222 and 231–249; these read TEEHKPKTET and QENK…ETHD. Lysine 276 serves as the catalytic N6-GMP-lysine intermediate.

This sequence belongs to the fungal TPase family. In terms of assembly, heterodimer. The mRNA-capping enzyme is composed of two separate chains alpha and beta, respectively a mRNA guanylyltransferase and an mRNA 5'-triphosphate monophosphatase. It depends on Mg(2+) as a cofactor.

It is found in the nucleus. It catalyses the reaction a 5'-end triphospho-ribonucleoside in mRNA + H2O = a 5'-end diphospho-ribonucleoside in mRNA + phosphate + H(+). In terms of biological role, first step of mRNA capping. Converts the 5'-triphosphate end of a nascent mRNA chain into a diphosphate end. The protein is mRNA-capping enzyme subunit beta (CET1) of Candida glabrata (strain ATCC 2001 / BCRC 20586 / JCM 3761 / NBRC 0622 / NRRL Y-65 / CBS 138) (Yeast).